The following is a 499-amino-acid chain: DNA-directed RNA polymerase subunit Rpo2N (499 aa).

Belongs to the RNA polymerase beta chain family. As to quaternary structure, part of the RNA polymerase complex.

The protein resides in the cytoplasm. The enzyme catalyses RNA(n) + a ribonucleoside 5'-triphosphate = RNA(n+1) + diphosphate. Its function is as follows. DNA-dependent RNA polymerase (RNAP) catalyzes the transcription of DNA into RNA using the four ribonucleoside triphosphates as substrates. The Rpo2 subunit (Rpo2N and Rpo2C in this organism) is implicated in DNA promoter recognition and in nucleotide binding. This Methanococcus vannielii (strain ATCC 35089 / DSM 1224 / JCM 13029 / OCM 148 / SB) protein is DNA-directed RNA polymerase subunit Rpo2N.